Here is a 453-residue protein sequence, read N- to C-terminus: Bifunctional protein GlmU (453 aa).

Residues 1 to 225 (MNIVILAAGT…EWETLGVNSK (225 aa)) are pyrophosphorylase. Residues 6–9 (LAAG), Lys20, Gln71, 76–77 (GT), 98–100 (YGD), Gly135, Glu150, Asn165, and Asn223 each bind UDP-N-acetyl-alpha-D-glucosamine. Residue Asp100 coordinates Mg(2+). Asn223 contacts Mg(2+). The linker stretch occupies residues 226–246 (AQLAELERIHQRTIADALLVD). The N-acetyltransferase stretch occupies residues 247-453 (GVTLADPARV…GYVRPVKKKS (207 aa)). Positions 329 and 347 each coordinate UDP-N-acetyl-alpha-D-glucosamine. His359 serves as the catalytic Proton acceptor. Residues Tyr362 and Asn373 each coordinate UDP-N-acetyl-alpha-D-glucosamine. Residues Ala376, 382 to 383 (NY), Ser401, and Ala419 contribute to the acetyl-CoA site.

This sequence in the N-terminal section; belongs to the N-acetylglucosamine-1-phosphate uridyltransferase family. In the C-terminal section; belongs to the transferase hexapeptide repeat family. As to quaternary structure, homotrimer. The cofactor is Mg(2+).

The protein resides in the cytoplasm. It catalyses the reaction alpha-D-glucosamine 1-phosphate + acetyl-CoA = N-acetyl-alpha-D-glucosamine 1-phosphate + CoA + H(+). It carries out the reaction N-acetyl-alpha-D-glucosamine 1-phosphate + UTP + H(+) = UDP-N-acetyl-alpha-D-glucosamine + diphosphate. It participates in nucleotide-sugar biosynthesis; UDP-N-acetyl-alpha-D-glucosamine biosynthesis; N-acetyl-alpha-D-glucosamine 1-phosphate from alpha-D-glucosamine 6-phosphate (route II): step 2/2. Its pathway is nucleotide-sugar biosynthesis; UDP-N-acetyl-alpha-D-glucosamine biosynthesis; UDP-N-acetyl-alpha-D-glucosamine from N-acetyl-alpha-D-glucosamine 1-phosphate: step 1/1. It functions in the pathway bacterial outer membrane biogenesis; LPS lipid A biosynthesis. Its function is as follows. Catalyzes the last two sequential reactions in the de novo biosynthetic pathway for UDP-N-acetylglucosamine (UDP-GlcNAc). The C-terminal domain catalyzes the transfer of acetyl group from acetyl coenzyme A to glucosamine-1-phosphate (GlcN-1-P) to produce N-acetylglucosamine-1-phosphate (GlcNAc-1-P), which is converted into UDP-GlcNAc by the transfer of uridine 5-monophosphate (from uridine 5-triphosphate), a reaction catalyzed by the N-terminal domain. In Burkholderia ambifaria (strain MC40-6), this protein is Bifunctional protein GlmU.